A 239-amino-acid polypeptide reads, in one-letter code: Orotidine 5'-phosphate decarboxylase (239 aa).

Substrate is bound by residues D11, K33, 60–69 (DLKLHDIPTT), T123, R185, Q194, G214, and R215. Catalysis depends on K62, which acts as the Proton donor.

This sequence belongs to the OMP decarboxylase family. Type 1 subfamily. As to quaternary structure, homodimer.

It carries out the reaction orotidine 5'-phosphate + H(+) = UMP + CO2. The protein operates within pyrimidine metabolism; UMP biosynthesis via de novo pathway; UMP from orotate: step 2/2. In terms of biological role, catalyzes the decarboxylation of orotidine 5'-monophosphate (OMP) to uridine 5'-monophosphate (UMP). This chain is Orotidine 5'-phosphate decarboxylase (pyrF), found in Bacillus subtilis (strain 168).